Here is a 459-residue protein sequence, read N- to C-terminus: Ribulose bisphosphate carboxylase large chain (459 aa).

An N6,N6,N6-trimethyllysine modification is found at K4. Positions 113 and 163 each coordinate substrate. K165 acts as the Proton acceptor in catalysis. Residue K167 participates in substrate binding. Positions 191, 193, and 194 each coordinate Mg(2+). At K191 the chain carries N6-carboxylysine. Catalysis depends on H284, which acts as the Proton acceptor. Positions 285, 317, and 369 each coordinate substrate.

The protein belongs to the RuBisCO large chain family. Type I subfamily. In terms of assembly, heterohexadecamer of 8 large chains and 8 small chains; disulfide-linked. The disulfide link is formed within the large subunit homodimers. It depends on Mg(2+) as a cofactor. Post-translationally, the disulfide bond which can form in the large chain dimeric partners within the hexadecamer appears to be associated with oxidative stress and protein turnover.

The protein localises to the plastid. It is found in the chloroplast. It carries out the reaction 2 (2R)-3-phosphoglycerate + 2 H(+) = D-ribulose 1,5-bisphosphate + CO2 + H2O. The catalysed reaction is D-ribulose 1,5-bisphosphate + O2 = 2-phosphoglycolate + (2R)-3-phosphoglycerate + 2 H(+). Its function is as follows. RuBisCO catalyzes two reactions: the carboxylation of D-ribulose 1,5-bisphosphate, the primary event in carbon dioxide fixation, as well as the oxidative fragmentation of the pentose substrate in the photorespiration process. Both reactions occur simultaneously and in competition at the same active site. The protein is Ribulose bisphosphate carboxylase large chain of Micranthes integrifolia (Wholeleaf saxifrage).